The primary structure comprises 856 residues: Inactive rhomboid protein 1 (856 aa).

Positions 1–21 are disordered; it reads MGEARRDSSSSLQHKKPPWLK. Over 1–412 the chain is Cytoplasmic; it reads MGEARRDSSS…HRPFFTYWLT (412 aa). 2 positions are modified to phosphoserine: serine 76 and serine 176. Threonine 180 and threonine 183 each carry phosphothreonine. Serine 391 carries the post-translational modification Phosphoserine. A helical membrane pass occupies residues 413–433; that stretch reads FVHSLVTILAVCIYGVAPVGF. Residues 434 to 656 are Lumenal-facing; it reads SQHETVDSVL…NPEVPDQFYR (223 aa). A glycan (N-linked (GlcNAc...) asparagine) is linked at asparagine 584. The chain crosses the membrane as a helical span at residues 657–677; sequence LWLSLFLHAGVLHCLVSVCFQ. The Cytoplasmic portion of the chain corresponds to 678-692; that stretch reads MTVLRDLEKLAGWHR. Residues 693–713 form a helical membrane-spanning segment; it reads IAIIYLLSGVTGNLASAIFLP. The Lumenal segment spans residues 714-715; it reads YR. The helical transmembrane segment at 716–736 threads the bilayer; it reads AEVGPAGSQFGILACLFVELF. Residues 737–747 lie on the Cytoplasmic side of the membrane; that stretch reads QSWQILARPWR. A helical transmembrane segment spans residues 748-768; that stretch reads AFFKLLAVVLFLFTFGLLPWI. At 769 to 773 the chain is on the lumenal side; the sequence is DNFAH. The helical transmembrane segment at 774 to 794 threads the bilayer; the sequence is ISGFISGLFLSFAFLPYISFG. Residues 795 to 804 lie on the Cytoplasmic side of the membrane; that stretch reads KFDLYRKRCQ. Residues 805–825 traverse the membrane as a helical segment; that stretch reads IIVFQLVFLGLLAGLVVLFYF. The Lumenal portion of the chain corresponds to 826–856; it reads YPVRCEWCEFLTCIPFTDKFCEKYELDAQLH.

It belongs to the peptidase S54 family. Homodimer, or homooligomer. Interacts with TGFA and HBEGF. Interacts with EGF; may retain EGF in the endoplasmic reticulum and regulates its degradation through the endoplasmic reticulum-associated degradation (ERAD). Interacts (via cytoplasmic N-terminus) with FRMD8/iTAP; this interaction leads to mutual protein stabilization. Interacts with ADAM17/TACE.

It localises to the endoplasmic reticulum membrane. Its subcellular location is the golgi apparatus membrane. Functionally, regulates ADAM17 protease, a sheddase of the epidermal growth factor (EGF) receptor ligands and TNF, thereby plays a role in sleep, cell survival, proliferation, migration and inflammation. Does not exhibit any protease activity on its own. This is Inactive rhomboid protein 1 (RHBDF1) from Bos taurus (Bovine).